The following is a 152-amino-acid chain: 3-hydroxyacyl-[acyl-carrier-protein] dehydratase FabZ (152 aa).

Residue histidine 58 is part of the active site.

This sequence belongs to the thioester dehydratase family. FabZ subfamily.

It is found in the cytoplasm. The enzyme catalyses a (3R)-hydroxyacyl-[ACP] = a (2E)-enoyl-[ACP] + H2O. Its function is as follows. Involved in unsaturated fatty acids biosynthesis. Catalyzes the dehydration of short chain beta-hydroxyacyl-ACPs and long chain saturated and unsaturated beta-hydroxyacyl-ACPs. The chain is 3-hydroxyacyl-[acyl-carrier-protein] dehydratase FabZ from Prochlorococcus marinus (strain MIT 9215).